We begin with the raw amino-acid sequence, 418 residues long: Histidine--tRNA ligase (418 aa).

It belongs to the class-II aminoacyl-tRNA synthetase family. As to quaternary structure, homodimer.

It localises to the cytoplasm. The enzyme catalyses tRNA(His) + L-histidine + ATP = L-histidyl-tRNA(His) + AMP + diphosphate + H(+). The polypeptide is Histidine--tRNA ligase (Thermoanaerobacter pseudethanolicus (strain ATCC 33223 / 39E) (Clostridium thermohydrosulfuricum)).